Consider the following 192-residue polypeptide: uncharacterized protein (192 aa).

The region spanning 29-160 is the Nudix hydrolase domain; the sequence is QRQAAVLIPV…PLDVYRRGNS (132 aa). The Nudix box signature appears at 67–89; sequence GAVDSTDASLIAAALREAQEEVA. Mg(2+) contacts are provided by Glu83 and Glu87.

This sequence belongs to the Nudix hydrolase family. PCD1 subfamily. Mn(2+) serves as cofactor. Requires Mg(2+) as cofactor.

Functionally, probably mediates the hydrolysis of some nucleoside diphosphate derivatives. This is an uncharacterized protein from Salmonella choleraesuis (strain SC-B67).